Reading from the N-terminus, the 545-residue chain is ATP synthase subunit alpha (545 aa).

An ATP-binding site is contributed by 172 to 179; the sequence is GDRKTGKT.

Belongs to the ATPase alpha/beta chains family. F-type ATPases have 2 components, CF(1) - the catalytic core - and CF(0) - the membrane proton channel. CF(1) has five subunits: alpha(3), beta(3), gamma(1), delta(1), epsilon(1). CF(0) has three main subunits: a(1), b(2) and c(9-12). The alpha and beta chains form an alternating ring which encloses part of the gamma chain. CF(1) is attached to CF(0) by a central stalk formed by the gamma and epsilon chains, while a peripheral stalk is formed by the delta and b chains.

The protein localises to the cell membrane. The catalysed reaction is ATP + H2O + 4 H(+)(in) = ADP + phosphate + 5 H(+)(out). In terms of biological role, produces ATP from ADP in the presence of a proton gradient across the membrane. The alpha chain is a regulatory subunit. This Corynebacterium urealyticum (strain ATCC 43042 / DSM 7109) protein is ATP synthase subunit alpha.